The chain runs to 181 residues: Protein TrbB (181 aa).

A signal peptide spans 1 to 22; that stretch reads MSLTKSLLFTLLLSAAAVQAST. The 136-residue stretch at 37-172 folds into the Thioredoxin domain; it reads TQPAQPAAGT…FMARVDTVLQ (136 aa).

The protein localises to the periplasm. In Escherichia coli (strain K12), this protein is Protein TrbB (trbB).